The sequence spans 383 residues: tRNA-specific 2-thiouridylase MnmA (383 aa).

ATP is bound by residues 9–16 (GMSGGVDS) and methionine 35. The interaction with target base in tRNA stretch occupies residues 95–97 (NPD). Cysteine 100 functions as the Nucleophile in the catalytic mechanism. A disulfide bridge links cysteine 100 with cysteine 196. Glycine 124 lines the ATP pocket. Residues 146–148 (KDQ) form an interaction with tRNA region. The active-site Cysteine persulfide intermediate is cysteine 196. Residues 308-309 (RY) form an interaction with tRNA region.

The protein belongs to the MnmA/TRMU family.

It is found in the cytoplasm. The catalysed reaction is S-sulfanyl-L-cysteinyl-[protein] + uridine(34) in tRNA + AH2 + ATP = 2-thiouridine(34) in tRNA + L-cysteinyl-[protein] + A + AMP + diphosphate + H(+). Catalyzes the 2-thiolation of uridine at the wobble position (U34) of tRNA, leading to the formation of s(2)U34. The polypeptide is tRNA-specific 2-thiouridylase MnmA (Burkholderia pseudomallei (strain 1106a)).